The following is a 186-amino-acid chain: UPF0398 protein BPUM_1952 (186 aa).

It belongs to the UPF0398 family.

The polypeptide is UPF0398 protein BPUM_1952 (Bacillus pumilus (strain SAFR-032)).